Reading from the N-terminus, the 258-residue chain is uncharacterized protein (258 aa).

Polar residues predominate over residues 40–54 (AQKTDTPLDSSSYAV). The interval 40–63 (AQKTDTPLDSSSYAVTSPEEAPNE) is disordered.

This is an uncharacterized protein from Treponema pallidum (strain Nichols).